A 523-amino-acid polypeptide reads, in one-letter code: Putative L-type lectin-domain containing receptor kinase V.6 (523 aa).

Residues 1–27 form the signal peptide; that stretch reads MFSEVKVLQIVLVQWLTLFSFTYNSHG. The tract at residues 28 to 242 is legume-lectin like; the sequence is TYILDGSAVF…TGSIRALHYM (215 aa). Topologically, residues 28–279 are extracellular; it reads TYILDGSAVF…KPSDRLRTVL (252 aa). 4 N-linked (GlcNAc...) asparagine glycosylation sites follow: Asn47, Asn59, Asn112, and Asn171. A helical membrane pass occupies residues 280–300; the sequence is AVCLTLALFAVFLASGIGFVF. Topologically, residues 301–523 are cytoplasmic; it reads YLRHKKVKEV…TGRAVRVKFF (223 aa). Residues 335-523 form the Protein kinase domain; the sequence is FKEKQLLGKG…TGRAVRVKFF (189 aa). Residues 341 to 349 and Lys364 each bind ATP; that span reads LGKGGFGQV. The active-site Proton acceptor is the Asp464.

The protein in the C-terminal section; belongs to the protein kinase superfamily. Ser/Thr protein kinase family. In the N-terminal section; belongs to the leguminous lectin family.

The protein localises to the cell membrane. It catalyses the reaction L-seryl-[protein] + ATP = O-phospho-L-seryl-[protein] + ADP + H(+). The catalysed reaction is L-threonyl-[protein] + ATP = O-phospho-L-threonyl-[protein] + ADP + H(+). The protein is Putative L-type lectin-domain containing receptor kinase V.6 (LECRK56) of Arabidopsis thaliana (Mouse-ear cress).